A 425-amino-acid polypeptide reads, in one-letter code: UPF0597 protein UNCMA_16400 (425 aa).

It belongs to the UPF0597 family.

The protein is UPF0597 protein UNCMA_16400 of Methanocella arvoryzae (strain DSM 22066 / NBRC 105507 / MRE50).